The primary structure comprises 388 residues: Chorismate synthase (388 aa).

The NADP(+) site is built by Arg-39 and Arg-45. FMN is bound by residues 130–132, 251–252, Ala-296, 311–315, and Arg-337; these read RSS, NA, and KPIPT.

This sequence belongs to the chorismate synthase family. Homotetramer. FMNH2 is required as a cofactor.

It carries out the reaction 5-O-(1-carboxyvinyl)-3-phosphoshikimate = chorismate + phosphate. Its pathway is metabolic intermediate biosynthesis; chorismate biosynthesis; chorismate from D-erythrose 4-phosphate and phosphoenolpyruvate: step 7/7. Its function is as follows. Catalyzes the anti-1,4-elimination of the C-3 phosphate and the C-6 proR hydrogen from 5-enolpyruvylshikimate-3-phosphate (EPSP) to yield chorismate, which is the branch point compound that serves as the starting substrate for the three terminal pathways of aromatic amino acid biosynthesis. This reaction introduces a second double bond into the aromatic ring system. The polypeptide is Chorismate synthase (Streptococcus equi subsp. zooepidemicus (strain H70)).